Consider the following 505-residue polypeptide: Probable cytosol aminopeptidase (505 aa).

The Mn(2+) site is built by Lys-268 and Asp-273. Lys-280 is a catalytic residue. Asp-291, Asp-350, and Glu-352 together coordinate Mn(2+). Residue Arg-354 is part of the active site.

It belongs to the peptidase M17 family. Mn(2+) is required as a cofactor.

Its subcellular location is the cytoplasm. It catalyses the reaction Release of an N-terminal amino acid, Xaa-|-Yaa-, in which Xaa is preferably Leu, but may be other amino acids including Pro although not Arg or Lys, and Yaa may be Pro. Amino acid amides and methyl esters are also readily hydrolyzed, but rates on arylamides are exceedingly low.. The catalysed reaction is Release of an N-terminal amino acid, preferentially leucine, but not glutamic or aspartic acids.. Functionally, presumably involved in the processing and regular turnover of intracellular proteins. Catalyzes the removal of unsubstituted N-terminal amino acids from various peptides. This is Probable cytosol aminopeptidase from Syntrophobacter fumaroxidans (strain DSM 10017 / MPOB).